A 473-amino-acid chain; its full sequence is Glutamate--tRNA ligase (473 aa).

Residues 11–21 (PSPTGFLHIGG) carry the 'HIGH' region motif. Positions 240 to 244 (KLSKR) match the 'KMSKS' region motif. An ATP-binding site is contributed by Lys243.

Belongs to the class-I aminoacyl-tRNA synthetase family. Glutamate--tRNA ligase type 1 subfamily. As to quaternary structure, monomer.

The protein resides in the cytoplasm. It catalyses the reaction tRNA(Glu) + L-glutamate + ATP = L-glutamyl-tRNA(Glu) + AMP + diphosphate. Its function is as follows. Catalyzes the attachment of glutamate to tRNA(Glu) in a two-step reaction: glutamate is first activated by ATP to form Glu-AMP and then transferred to the acceptor end of tRNA(Glu). The chain is Glutamate--tRNA ligase from Rhodopseudomonas palustris (strain BisB5).